The primary structure comprises 302 residues: Ventral anterior homeobox 2a (302 aa).

Disordered regions lie at residues 1–35 (MFDQATSMGDGVSEERSPLCGKSATSCSERVRDKG), 50–73 (KDIPVTSTSSPGSSKEEVQDSQST), 156–175 (RRTKQKKDQSRDSEKRSSST), 199–223 (PPNLISSSQNNMGTSSGNGTNLGTS), and 282–302 (AFEPYTRLDRKDTASSKKSTS). The homeobox DNA-binding region spans 105–164 (PKRTRTSFTAEQLYRLELEFQRCQYVVGRERTELARQLNLSETQVKVWFQNRRTKQKKDQ). Positions 161–172 (KKDQSRDSEKRS) are enriched in basic and acidic residues. Residues 204 to 223 (SSSQNNMGTSSGNGTNLGTS) show a composition bias toward low complexity. Residues 287-296 (TRLDRKDTAS) show a composition bias toward basic and acidic residues.

Belongs to the EMX homeobox family.

It is found in the nucleus. In terms of biological role, transcription factor that may function in dorsoventral specification of the forebrain. Regulates the expression of Wnt signaling antagonists including the expression of a truncated tcf7l2 isoform that cannot bind ctnnb1 and acts therefore as a potent dominant-negative Wnt antagonist. Plays a crucial role in eye development and, in particular, in the specification of the ventral optic vesicle. May be a regulator of axial polarization in the retina. This chain is Ventral anterior homeobox 2a (vax2-a), found in Xenopus laevis (African clawed frog).